Consider the following 117-residue polypeptide: MNAVTEEIPSPLIFTDNAARKVKELIDEEGSPDLKLRVFVSGGGCSGFQYGFTFEETINEDDTTVDKDGVTLLIDPMSLQYLVGAEIDYQDSLQGSQFVIRNPNATTTCGCGSSFSA.

3 residues coordinate iron-sulfur cluster: Cys45, Cys109, and Cys111.

This sequence belongs to the HesB/IscA family. As to quaternary structure, homodimer. Requires iron-sulfur cluster as cofactor.

Functionally, required for insertion of 4Fe-4S clusters. This chain is Putative iron-sulfur cluster insertion protein ErpA, found in Methylobacillus flagellatus (strain ATCC 51484 / DSM 6875 / VKM B-1610 / KT).